We begin with the raw amino-acid sequence, 615 residues long: Crinkler effector protein 15 (615 aa).

Residues 1-17 (MVKLVCAIVGVAGSAFP) form the signal peptide. Residues 18–54 (VDIDASQLVGDLKKAIKAENAMTFTGDAKDLQLFLAK) are LQLFLAK domain. The segment at 55 to 136 (QPVDDESGKE…NMELPSSEQI (82 aa)) is DWL domain. Residues 137-143 (HVLVVVP) carry the HVLVXXP motif motif. N531 carries N-linked (GlcNAc...) asparagine glycosylation.

It belongs to the Crinkler effector family.

The protein localises to the secreted. It is found in the host nucleus. Its function is as follows. Secreted effector that elicits necrosis in host plants, a characteristic of plant innate immunity. In Phytophthora infestans (Potato late blight agent), this protein is Crinkler effector protein 15.